Here is a 525-residue protein sequence, read N- to C-terminus: GMP synthase [glutamine-hydrolyzing] (525 aa).

In terms of domain architecture, Glutamine amidotransferase type-1 spans 8 to 207 (KILILDFGSQ…ALDICECEAN (200 aa)). The active-site Nucleophile is Cys85. Active-site residues include His181 and Glu183. The GMPS ATP-PPase domain occupies 208–400 (WKPTSIIEDA…LGLPYDMLYR (193 aa)). 235–241 (SGGVDSS) contacts ATP.

Homodimer.

The catalysed reaction is XMP + L-glutamine + ATP + H2O = GMP + L-glutamate + AMP + diphosphate + 2 H(+). The protein operates within purine metabolism; GMP biosynthesis; GMP from XMP (L-Gln route): step 1/1. Its function is as follows. Catalyzes the synthesis of GMP from XMP. In Shewanella sediminis (strain HAW-EB3), this protein is GMP synthase [glutamine-hydrolyzing].